The primary structure comprises 199 residues: VAMP-like protein YKT61 (199 aa).

Positions Leu7–Asp133 constitute a Longin domain. The region spanning Lys139–Leu199 is the v-SNARE coiled-coil homology domain. Cys195 carries S-palmitoyl cysteine lipidation. Cys196 carries the cysteine methyl ester modification. Cys196 carries the S-geranylgeranyl cysteine lipid modification. The propeptide at Thr197 to Leu199 is removed in mature form.

It belongs to the synaptobrevin family. Interacts with SYP41. Core constituent of the SNARE complex required for membrane fusion at the trans-Golgi network. As to expression, expressed ubiquitously in roots, stems, flowers and leaves.

It localises to the cell membrane. Functionally, may be involved in the secretory pathway. Essential for membrane fusion mediated by either SYP41 or SYP61; triggers the fusion of phospholipid vesicles containing SYP41 or SYP61 and VTI12. The protein is VAMP-like protein YKT61 of Arabidopsis thaliana (Mouse-ear cress).